A 248-amino-acid polypeptide reads, in one-letter code: 3-deoxy-manno-octulosonate cytidylyltransferase (248 aa).

This sequence belongs to the KdsB family.

The protein resides in the cytoplasm. It catalyses the reaction 3-deoxy-alpha-D-manno-oct-2-ulosonate + CTP = CMP-3-deoxy-beta-D-manno-octulosonate + diphosphate. It participates in nucleotide-sugar biosynthesis; CMP-3-deoxy-D-manno-octulosonate biosynthesis; CMP-3-deoxy-D-manno-octulosonate from 3-deoxy-D-manno-octulosonate and CTP: step 1/1. The protein operates within bacterial outer membrane biogenesis; lipopolysaccharide biosynthesis. Activates KDO (a required 8-carbon sugar) for incorporation into bacterial lipopolysaccharide in Gram-negative bacteria. This chain is 3-deoxy-manno-octulosonate cytidylyltransferase, found in Escherichia coli (strain K12 / MC4100 / BW2952).